The sequence spans 157 residues: UPF0225 protein PA14_50900 (157 aa).

Belongs to the UPF0225 family.

The polypeptide is UPF0225 protein PA14_50900 (Pseudomonas aeruginosa (strain UCBPP-PA14)).